Reading from the N-terminus, the 117-residue chain is Large ribosomal subunit protein uL18 (117 aa).

Belongs to the universal ribosomal protein uL18 family. As to quaternary structure, part of the 50S ribosomal subunit; part of the 5S rRNA/L5/L18/L25 subcomplex. Contacts the 5S and 23S rRNAs.

This is one of the proteins that bind and probably mediate the attachment of the 5S RNA into the large ribosomal subunit, where it forms part of the central protuberance. The protein is Large ribosomal subunit protein uL18 of Buchnera aphidicola subsp. Acyrthosiphon kondoi (Acyrthosiphon kondoi symbiotic bacterium).